The chain runs to 465 residues: Phosphatidylserine synthase 1 (465 aa).

Residues 1–35 (MVSAMRSRTLSKDDVNYKMHFRMINEQQVEDITID) are Cytoplasmic-facing. Residues 36-56 (FFYKPHTITLLTFTTVSLMYF) traverse the membrane as a helical segment. The Lumenal segment spans residues 57–68 (AFTRENTSQEDN). Residues 69-89 (IWKGILSVIFFFLIISVLAFP) traverse the membrane as a helical segment. At 90 to 102 (NGPFTRPHPAIWR) the chain is on the cytoplasmic side. A helical membrane pass occupies residues 103 to 123 (MVFGLSVLYFLFLVFLLFLNV). Over 124 to 186 (EQVKAVMYWL…AMKALLIRSY (63 aa)) the chain is Lumenal. The chain crosses the membrane as a helical span at residues 187-207 (GLCWTISITWEMTELFFMHLL). The Cytoplasmic portion of the chain corresponds to 208–216 (PNFAECWWD). Residues 217–237 (QVILDILLCNGGGILLGMVVC) traverse the membrane as a helical segment. The Lumenal segment spans residues 238–286 (RFLEMRTYHWASFKDIHTTTGKIKRAVLQFTPASWIYVRWFDPKSSFQR). A helical transmembrane segment spans residues 287 to 307 (VAGVYLFMIIWQLTELNTFFL). Residues 308 to 319 (KHIFVFQASHPL) are Cytoplasmic-facing. The helical transmembrane segment at 320-342 (SWCRILFIGIITAPTVRQYYAYL) threads the bilayer. Residues 343-355 (TDTQCKRVGTQCW) are Lumenal-facing. Residues 356-376 (VFGAIAFLEATVCIKFGQDLF) form a helical membrane-spanning segment. At 377-383 (SKTHLLY) the chain is on the cytoplasmic side. A helical membrane pass occupies residues 384–404 (VFLWLFSVAVITFLCLYGMVW). Over 405–465 (YADYCGQREK…GKVTNGVGKK (61 aa)) the chain is Lumenal. Positions 440-465 (PVKQNEGTSRRKNRHKGKVTNGVGKK) are disordered. Basic residues predominate over residues 449-465 (RRKNRHKGKVTNGVGKK).

This sequence belongs to the phosphatidyl serine synthase family.

The protein resides in the endoplasmic reticulum membrane. The enzyme catalyses a 1,2-diacyl-sn-glycero-3-phosphoethanolamine + L-serine = a 1,2-diacyl-sn-glycero-3-phospho-L-serine + ethanolamine. The catalysed reaction is a 1,2-diacyl-sn-glycero-3-phosphocholine + L-serine = a 1,2-diacyl-sn-glycero-3-phospho-L-serine + choline. Its pathway is phospholipid metabolism; phosphatidylserine biosynthesis. Functionally, catalyzes a base-exchange reaction in which the polar head group of phosphatidylethanolamine (PE) or phosphatidylcholine (PC) is replaced by L-serine. Catalyzes mainly the conversion of phosphatidylcholine but also converts, in vitro and to a lesser extent, phosphatidylethanolamine. The protein is Phosphatidylserine synthase 1 (ptdss1) of Xenopus tropicalis (Western clawed frog).